Here is a 251-residue protein sequence, read N- to C-terminus: Pantothenate synthetase (251 aa).

28-35 (MGALHTGH) provides a ligand contact to ATP. Residue His35 is the Proton donor of the active site. Residue Gln59 coordinates (R)-pantoate. Gln59 contacts beta-alanine. ATP is bound at residue 145–148 (GEKD). Gln151 contacts (R)-pantoate. ATP-binding positions include Val174 and 182–185 (KSSR).

The protein belongs to the pantothenate synthetase family. As to quaternary structure, homodimer.

Its subcellular location is the cytoplasm. It carries out the reaction (R)-pantoate + beta-alanine + ATP = (R)-pantothenate + AMP + diphosphate + H(+). It functions in the pathway cofactor biosynthesis; (R)-pantothenate biosynthesis; (R)-pantothenate from (R)-pantoate and beta-alanine: step 1/1. Functionally, catalyzes the condensation of pantoate with beta-alanine in an ATP-dependent reaction via a pantoyl-adenylate intermediate. This chain is Pantothenate synthetase, found in Bdellovibrio bacteriovorus (strain ATCC 15356 / DSM 50701 / NCIMB 9529 / HD100).